A 573-amino-acid chain; its full sequence is Sulfite reductase [NADPH] hemoprotein beta-component (573 aa).

The interval M1 to K20 is disordered. Residues C438, C444, C483, and C487 each coordinate [4Fe-4S] cluster. Residue C487 participates in siroheme binding.

Belongs to the nitrite and sulfite reductase 4Fe-4S domain family. In terms of assembly, alpha(8)-beta(8). The alpha component is a flavoprotein, the beta component is a hemoprotein. Siroheme is required as a cofactor. It depends on [4Fe-4S] cluster as a cofactor.

It carries out the reaction hydrogen sulfide + 3 NADP(+) + 3 H2O = sulfite + 3 NADPH + 4 H(+). Its pathway is sulfur metabolism; hydrogen sulfide biosynthesis; hydrogen sulfide from sulfite (NADPH route): step 1/1. Functionally, component of the sulfite reductase complex that catalyzes the 6-electron reduction of sulfite to sulfide. This is one of several activities required for the biosynthesis of L-cysteine from sulfate. The polypeptide is Sulfite reductase [NADPH] hemoprotein beta-component (Geobacillus kaustophilus (strain HTA426)).